Here is a 1082-residue protein sequence, read N- to C-terminus: DNA-directed RNA polymerase subunit beta (1082 aa).

This sequence belongs to the RNA polymerase beta chain family. In terms of assembly, in plastids the minimal PEP RNA polymerase catalytic core is composed of four subunits: alpha, beta, beta', and beta''. When a (nuclear-encoded) sigma factor is associated with the core the holoenzyme is formed, which can initiate transcription.

The protein resides in the plastid. The protein localises to the chloroplast. It carries out the reaction RNA(n) + a ribonucleoside 5'-triphosphate = RNA(n+1) + diphosphate. DNA-dependent RNA polymerase catalyzes the transcription of DNA into RNA using the four ribonucleoside triphosphates as substrates. This Euglena gracilis protein is DNA-directed RNA polymerase subunit beta.